The primary structure comprises 82 residues: Large ribosomal subunit protein bL27 (82 aa).

The disordered stretch occupies residues 1–21; that stretch reads MAHKKGASSSRNGRDSNAKRL.

The protein belongs to the bacterial ribosomal protein bL27 family.

The protein is Large ribosomal subunit protein bL27 of Tropheryma whipplei (strain Twist) (Whipple's bacillus).